The sequence spans 392 residues: Y' element ATP-dependent helicase YFL066C (392 aa).

The Helicase ATP-binding domain occupies 1 to 175; sequence MADTPSVAVQ…LQRIGLTGLA (175 aa). Position 11-18 (11-18) interacts with ATP; it reads APPGYGKT. Residues 232–381 form the Helicase C-terminal domain; that stretch reads KLLLALFEIE…EFYGLESKKG (150 aa).

Belongs to the helicase family. Yeast subtelomeric Y' repeat subfamily.

Catalyzes DNA unwinding and is involved in telomerase-independent telomere maintenance. The sequence is that of Y' element ATP-dependent helicase YFL066C from Saccharomyces cerevisiae (strain ATCC 204508 / S288c) (Baker's yeast).